The chain runs to 108 residues: Cytochrome c (108 aa).

Heme c-binding residues include cysteine 19, cysteine 22, histidine 23, and methionine 85.

The protein belongs to the cytochrome c family. Binds 1 heme c group covalently per subunit.

The protein localises to the mitochondrion intermembrane space. Its function is as follows. Electron carrier protein. The oxidized form of the cytochrome c heme group can accept an electron from the heme group of the cytochrome c1 subunit of cytochrome reductase. Cytochrome c then transfers this electron to the cytochrome oxidase complex, the final protein carrier in the mitochondrial electron-transport chain. This is Cytochrome c from Cochliobolus lunatus (Filamentous fungus).